We begin with the raw amino-acid sequence, 163 residues long: UPF0303 protein SAV_5210 (163 aa).

The protein belongs to the UPF0303 family.

This is UPF0303 protein SAV_5210 from Streptomyces avermitilis (strain ATCC 31267 / DSM 46492 / JCM 5070 / NBRC 14893 / NCIMB 12804 / NRRL 8165 / MA-4680).